We begin with the raw amino-acid sequence, 235 residues long: Phosphoribosylaminoimidazole-succinocarboxamide synthase (235 aa).

It belongs to the SAICAR synthetase family.

It carries out the reaction 5-amino-1-(5-phospho-D-ribosyl)imidazole-4-carboxylate + L-aspartate + ATP = (2S)-2-[5-amino-1-(5-phospho-beta-D-ribosyl)imidazole-4-carboxamido]succinate + ADP + phosphate + 2 H(+). The protein operates within purine metabolism; IMP biosynthesis via de novo pathway; 5-amino-1-(5-phospho-D-ribosyl)imidazole-4-carboxamide from 5-amino-1-(5-phospho-D-ribosyl)imidazole-4-carboxylate: step 1/2. This chain is Phosphoribosylaminoimidazole-succinocarboxamide synthase, found in Clostridium novyi (strain NT).